Consider the following 365-residue polypeptide: Alanine racemase (365 aa).

Lys32 (proton acceptor; specific for D-alanine) is an active-site residue. The residue at position 32 (Lys32) is an N6-(pyridoxal phosphate)lysine. Position 128 (Arg128) interacts with substrate. Tyr257 (proton acceptor; specific for L-alanine) is an active-site residue. Position 305 (Met305) interacts with substrate.

It belongs to the alanine racemase family. It depends on pyridoxal 5'-phosphate as a cofactor.

It catalyses the reaction L-alanine = D-alanine. It participates in amino-acid biosynthesis; D-alanine biosynthesis; D-alanine from L-alanine: step 1/1. Its function is as follows. Catalyzes the interconversion of L-alanine and D-alanine. May also act on other amino acids. This chain is Alanine racemase (alr), found in Francisella philomiragia subsp. philomiragia (strain ATCC 25017 / CCUG 19701 / FSC 153 / O#319-036).